The primary structure comprises 295 residues: Phosphatidylserine decarboxylase proenzyme (295 aa).

Residues D101, H158, and S262 each act as charge relay system; for autoendoproteolytic cleavage activity in the active site. The Schiff-base intermediate with substrate; via pyruvic acid; for decarboxylase activity role is filled by S262. The residue at position 262 (S262) is a Pyruvic acid (Ser); by autocatalysis.

Belongs to the phosphatidylserine decarboxylase family. PSD-B subfamily. Prokaryotic type I sub-subfamily. In terms of assembly, heterodimer of a large membrane-associated beta subunit and a small pyruvoyl-containing alpha subunit. Requires pyruvate as cofactor. Post-translationally, is synthesized initially as an inactive proenzyme. Formation of the active enzyme involves a self-maturation process in which the active site pyruvoyl group is generated from an internal serine residue via an autocatalytic post-translational modification. Two non-identical subunits are generated from the proenzyme in this reaction, and the pyruvate is formed at the N-terminus of the alpha chain, which is derived from the carboxyl end of the proenzyme. The autoendoproteolytic cleavage occurs by a canonical serine protease mechanism, in which the side chain hydroxyl group of the serine supplies its oxygen atom to form the C-terminus of the beta chain, while the remainder of the serine residue undergoes an oxidative deamination to produce ammonia and the pyruvoyl prosthetic group on the alpha chain. During this reaction, the Ser that is part of the protease active site of the proenzyme becomes the pyruvoyl prosthetic group, which constitutes an essential element of the active site of the mature decarboxylase.

It localises to the cell membrane. It carries out the reaction a 1,2-diacyl-sn-glycero-3-phospho-L-serine + H(+) = a 1,2-diacyl-sn-glycero-3-phosphoethanolamine + CO2. It participates in phospholipid metabolism; phosphatidylethanolamine biosynthesis; phosphatidylethanolamine from CDP-diacylglycerol: step 2/2. Its function is as follows. Catalyzes the formation of phosphatidylethanolamine (PtdEtn) from phosphatidylserine (PtdSer). The protein is Phosphatidylserine decarboxylase proenzyme of Pasteurella multocida (strain Pm70).